The chain runs to 141 residues: Hemoglobin subunit zeta (141 aa).

S1 is modified (N-acetylserine). Residues 1 to 141 (SLTKAERTII…VSGVLTEKYR (141 aa)) form the Globin domain. T28 is subject to Phosphothreonine. S52 carries the post-translational modification Phosphoserine. Residue H58 coordinates heme b. S72 is subject to Phosphoserine. H87 is a binding site for heme b.

It belongs to the globin family. As to quaternary structure, heterotetramer of two zeta chains and two epsilon chains.

Its function is as follows. The zeta chain is an alpha-type chain of mammalian embryonic hemoglobin. The protein is Hemoglobin subunit zeta of Sus scrofa (Pig).